The sequence spans 824 residues: Translation initiation factor IF-2 (824 aa).

2 disordered regions span residues 1 to 32 and 45 to 232; these read MSDT…GRTK and VPKA…MGGQ. Residues 45-57 show a composition bias toward low complexity; sequence VPKAGATTSAGGK. Over residues 86–144 the composition is skewed to basic and acidic residues; the sequence is KAREAEEEAARIAEEKARAEERERRRAEQEERERAEREREESLKAKAEEDKRRKDEAEA. The segment covering 145 to 167 has biased composition (low complexity); it reads AAKAAAAPAAEPVVQRPAAKAAP. Positions 170 to 193 are enriched in basic and acidic residues; sequence APRKQQDRDRDNKRGGKGNDDSRR. One can recognise a tr-type G domain in the interval 321–489; the sequence is TRPPVVTIMG…AIALQAEILE (169 aa). A G1 region spans residues 330–337; the sequence is GHVDHGKT. 330-337 contacts GTP; that stretch reads GHVDHGKT. A G2 region spans residues 355–359; that stretch reads GITQH. The segment at 377–380 is G3; sequence DTPG. Residues 377 to 381 and 431 to 434 contribute to the GTP site; these read DTPGH and NKID. A G4 region spans residues 431 to 434; sequence NKID. Residues 467–469 form a G5 region; the sequence is SAI.

It belongs to the TRAFAC class translation factor GTPase superfamily. Classic translation factor GTPase family. IF-2 subfamily.

The protein localises to the cytoplasm. One of the essential components for the initiation of protein synthesis. Protects formylmethionyl-tRNA from spontaneous hydrolysis and promotes its binding to the 30S ribosomal subunits. Also involved in the hydrolysis of GTP during the formation of the 70S ribosomal complex. The chain is Translation initiation factor IF-2 from Roseobacter denitrificans (strain ATCC 33942 / OCh 114) (Erythrobacter sp. (strain OCh 114)).